We begin with the raw amino-acid sequence, 225 residues long: Pathogenesis-related thaumatin-like protein 3.8 (225 aa).

An N-terminal signal peptide occupies residues 1–26 (MAKVSDLALLLVAGMAISLYIQETGA). Cystine bridges form between C35–C224, C76–C86, C91–C97, C139–C213, C144–C197, C152–C162, C166–C175, and C176–C184. An N-linked (GlcNAc...) asparagine glycan is attached at N188.

This sequence belongs to the thaumatin family.

Its function is as follows. May be involved in disease resistance. This is Pathogenesis-related thaumatin-like protein 3.8 from Cryptomeria japonica (Japanese cedar).